The primary structure comprises 358 residues: MTAYLLAGGGTAGHVNPLLAVADRLRRDDPAAEVLVLGTAEGLEARLVPARGYELATIPRLPFPRRPNAAAVRFPGEYRRSVRAVGELIRARGIAAVVGFGGYAAAPAYSAARKAAVPLILHEANARPGLASRLGARYTPWVGVAFEGTRLPHARFVGMPLRPEIEELDRVAARPAALAEFGLAADRPTLLVTGGSLGARRINQTIAARAVRLTEAGWQVLHIQGGRGELSDPGLPHYRLLGYCDRMDLALALADFAVARAGAATLCEFAALGVPAVYVPFPIGNGEQRHNAAGVVAAGGGVLVDDAGFLPAWVDAQLLPLLADRARVAEMAERAASVGVRDGSDRVVALIRTGLSAA.

Residues 11-13 (TAG), N125, R162, S196, and Q288 each bind UDP-N-acetyl-alpha-D-glucosamine.

Belongs to the glycosyltransferase 28 family. MurG subfamily.

The protein resides in the cell membrane. The catalysed reaction is di-trans,octa-cis-undecaprenyl diphospho-N-acetyl-alpha-D-muramoyl-L-alanyl-D-glutamyl-meso-2,6-diaminopimeloyl-D-alanyl-D-alanine + UDP-N-acetyl-alpha-D-glucosamine = di-trans,octa-cis-undecaprenyl diphospho-[N-acetyl-alpha-D-glucosaminyl-(1-&gt;4)]-N-acetyl-alpha-D-muramoyl-L-alanyl-D-glutamyl-meso-2,6-diaminopimeloyl-D-alanyl-D-alanine + UDP + H(+). It participates in cell wall biogenesis; peptidoglycan biosynthesis. In terms of biological role, cell wall formation. Catalyzes the transfer of a GlcNAc subunit on undecaprenyl-pyrophosphoryl-MurNAc-pentapeptide (lipid intermediate I) to form undecaprenyl-pyrophosphoryl-MurNAc-(pentapeptide)GlcNAc (lipid intermediate II). This Leifsonia xyli subsp. xyli (strain CTCB07) protein is UDP-N-acetylglucosamine--N-acetylmuramyl-(pentapeptide) pyrophosphoryl-undecaprenol N-acetylglucosamine transferase.